Reading from the N-terminus, the 378-residue chain is Queuine tRNA-ribosyltransferase (378 aa).

Residue D91 is the Proton acceptor of the active site. Substrate is bound by residues D91–F95, D145, Q189, and G216. The interval G247–D253 is RNA binding. D266 serves as the catalytic Nucleophile. The segment at T271–R275 is RNA binding; important for wobble base 34 recognition. Positions 304, 306, 309, and 335 each coordinate Zn(2+).

It belongs to the queuine tRNA-ribosyltransferase family. Homodimer. Within each dimer, one monomer is responsible for RNA recognition and catalysis, while the other monomer binds to the replacement base PreQ1. It depends on Zn(2+) as a cofactor.

It carries out the reaction 7-aminomethyl-7-carbaguanine + guanosine(34) in tRNA = 7-aminomethyl-7-carbaguanosine(34) in tRNA + guanine. Its pathway is tRNA modification; tRNA-queuosine biosynthesis. Its function is as follows. Catalyzes the base-exchange of a guanine (G) residue with the queuine precursor 7-aminomethyl-7-deazaguanine (PreQ1) at position 34 (anticodon wobble position) in tRNAs with GU(N) anticodons (tRNA-Asp, -Asn, -His and -Tyr). Catalysis occurs through a double-displacement mechanism. The nucleophile active site attacks the C1' of nucleotide 34 to detach the guanine base from the RNA, forming a covalent enzyme-RNA intermediate. The proton acceptor active site deprotonates the incoming PreQ1, allowing a nucleophilic attack on the C1' of the ribose to form the product. After dissociation, two additional enzymatic reactions on the tRNA convert PreQ1 to queuine (Q), resulting in the hypermodified nucleoside queuosine (7-(((4,5-cis-dihydroxy-2-cyclopenten-1-yl)amino)methyl)-7-deazaguanosine). This Vibrio vulnificus (strain CMCP6) protein is Queuine tRNA-ribosyltransferase.